The chain runs to 295 residues: Sulfotransferase 1E1 (295 aa).

Residue 48-53 (KSGTTW) participates in 3'-phosphoadenylyl sulfate binding. 106–108 (KTH) serves as a coordination point for substrate. Histidine 108 serves as the catalytic Proton acceptor. Residues arginine 130 and serine 138 each coordinate 3'-phosphoadenylyl sulfate. Serine 156 bears the Phosphoserine mark. Residues tyrosine 193, 227–232 (TSFQEM), and 257–259 (RKG) contribute to the 3'-phosphoadenylyl sulfate site.

This sequence belongs to the sulfotransferase 1 family. Homodimer. As to expression, testis and at very low level in the placenta.

Its subcellular location is the cytoplasm. It localises to the cytosol. The catalysed reaction is estrone + 3'-phosphoadenylyl sulfate = estrone 3-sulfate + adenosine 3',5'-bisphosphate + H(+). It catalyses the reaction 17beta-estradiol + 3'-phosphoadenylyl sulfate = 17beta-estradiol 3-sulfate + adenosine 3',5'-bisphosphate + H(+). The enzyme catalyses (24S)-hydroxycholesterol + 3'-phosphoadenylyl sulfate = (24S)-hydroxycholesterol 3-sulfate + adenosine 3',5'-bisphosphate + H(+). It carries out the reaction 3beta-hydroxyandrost-5-en-17-one + 3'-phosphoadenylyl sulfate = dehydroepiandrosterone 3-sulfate + adenosine 3',5'-bisphosphate + H(+). The catalysed reaction is 4-ethylphenol + 3'-phosphoadenylyl sulfate = 4-ethylphenyl sulfate + adenosine 3',5'-bisphosphate + H(+). With respect to regulation, inhibited by estradiol. Sulfotransferase that utilizes 3'-phospho-5'-adenylyl sulfate (PAPS) as sulfonate donor to catalyze the sulfate conjugation of estradiol and estrone. Is a key enzyme in estrogen homeostasis, the sulfation of estrogens leads to their inactivation. Also sulfates dehydroepiandrosterone, pregnenolone, (24S)-hydroxycholesterol and xenobiotic compounds like ethinylestradiol, equalenin, diethyl stilbesterol and 1-naphthol at significantly lower efficiency. Does not sulfonate cortisol, testosterone and dopamine. May play a role in gut microbiota-host metabolic interaction. O-sulfonates 4-ethylphenol (4-EP), a dietary tyrosine-derived metabolite produced by gut bacteria. The product 4-EPS crosses the blood-brain barrier and may negatively regulate oligodendrocyte maturation and myelination, affecting the functional connectivity of different brain regions associated with the limbic system. The protein is Sulfotransferase 1E1 (Sult1e1) of Mus musculus (Mouse).